Reading from the N-terminus, the 155-residue chain is Gene 27 protein (155 aa).

The interval 41–114 (KAKTQGMNVP…KAPENPNLPN (74 aa)) is disordered. Basic and acidic residues-rich tracts occupy residues 55-68 (KKPE…EKPT) and 78-95 (TAKE…ETKA).

Required for late gene transcription and DNA replication. The protein is Gene 27 protein (27) of Bacillus subtilis (Bacteriophage SP01).